Reading from the N-terminus, the 514-residue chain is Peptide chain release factor 3 (514 aa).

Residues Lys8 to His268 enclose the tr-type G domain. Residues Ser17–Thr24, Asp85–His89, and Asn139–Asp142 each bind GTP.

This sequence belongs to the TRAFAC class translation factor GTPase superfamily. Classic translation factor GTPase family. PrfC subfamily.

The protein localises to the cytoplasm. Increases the formation of ribosomal termination complexes and stimulates activities of RF-1 and RF-2. It binds guanine nucleotides and has strong preference for UGA stop codons. It may interact directly with the ribosome. The stimulation of RF-1 and RF-2 is significantly reduced by GTP and GDP, but not by GMP. The sequence is that of Peptide chain release factor 3 from Streptococcus thermophilus (strain ATCC BAA-491 / LMD-9).